The following is a 453-amino-acid chain: Carbamoyl phosphate synthase arginine-specific small chain (453 aa).

Residues 1–28 constitute a mitochondrion transit peptide; sequence MFARVFKAMPARASALTSVNASIPARFM. The region spanning 219–406 is the Glutamine amidotransferase type-1 domain; sequence HVAVIDCGVK…IDSVKKYKAS (188 aa). Cys-295 (nucleophile) is an active-site residue. Active-site residues include His-379 and Glu-381.

This sequence belongs to the CarA family. Heterodimer composed of 2 chains; the small (or glutamine) chain promotes the hydrolysis of glutamine to ammonia, which is used by the large (or ammonia) chain to synthesize carbamoyl phosphate.

Its subcellular location is the mitochondrion matrix. The enzyme catalyses hydrogencarbonate + L-glutamine + 2 ATP + H2O = carbamoyl phosphate + L-glutamate + 2 ADP + phosphate + 2 H(+). It catalyses the reaction L-glutamine + H2O = L-glutamate + NH4(+). It participates in amino-acid biosynthesis; L-arginine biosynthesis; carbamoyl phosphate from bicarbonate: step 1/1. In terms of biological role, small subunit of the arginine-specific carbamoyl phosphate synthase (CPSase). CPSase catalyzes the formation of carbamoyl phosphate from the ammonia moiety of glutamine, carbonate, and phosphate donated by ATP, the first step of the arginine biosynthetic pathway. The small subunit (glutamine amidotransferase) binds and cleaves glutamine to supply the large subunit with the substrate ammonia. The polypeptide is Carbamoyl phosphate synthase arginine-specific small chain (cpa1) (Aspergillus fumigatus (strain ATCC MYA-4609 / CBS 101355 / FGSC A1100 / Af293) (Neosartorya fumigata)).